The following is a 287-amino-acid chain: Large ribosomal subunit protein uL3 (287 aa).

The tract at residues 228 to 287 (KAPEAKPAKLSKKKQAKELAKAQAANQQTVEAKVDTPVVEPKPTEVKKAAPVVEKKGEDK) is disordered. Residues 269–287 (KPTEVKKAAPVVEKKGEDK) are compositionally biased toward basic and acidic residues.

This sequence belongs to the universal ribosomal protein uL3 family. In terms of assembly, part of the 50S ribosomal subunit. Forms a cluster with proteins L14 and L19.

In terms of biological role, one of the primary rRNA binding proteins, it binds directly near the 3'-end of the 23S rRNA, where it nucleates assembly of the 50S subunit. The sequence is that of Large ribosomal subunit protein uL3 from Mycoplasma pneumoniae (strain ATCC 29342 / M129 / Subtype 1) (Mycoplasmoides pneumoniae).